Reading from the N-terminus, the 37-residue chain is Large ribosomal subunit protein bL36c (37 aa).

This sequence belongs to the bacterial ribosomal protein bL36 family.

It is found in the plastid. This Cuscuta gronovii (Common dodder) protein is Large ribosomal subunit protein bL36c.